The primary structure comprises 360 residues: Inward rectifier potassium channel 13 (360 aa).

The Cytoplasmic portion of the chain corresponds to 1–50; it reads MDGSHCKVIAPLLTERHQRMVTKDGHSTLQMDGAQTGLAYLRDAWGILMD. The chain crosses the membrane as a helical span at residues 51 to 77; it reads MRWRWMMLVFSASFVIHWLVFAVLWYI. At 78–105 the chain is on the extracellular side; that stretch reads LAEMNGDLGLDHDAPPENHTICVKYITS. Residues 106–122 constitute an intramembrane region (helical; Pore-forming); the sequence is FTAAFSFSLETQLTIGY. The Selectivity filter motif lies at 119–124; the sequence is TIGYGT. The Extracellular portion of the chain corresponds to 123 to 131; sequence GTMFPSGDC. The helical transmembrane segment at 132–157 threads the bilayer; the sequence is PSAIALLAIQMLLGLMLEAFITGAFV. Residues 158–360 lie on the Cytoplasmic side of the membrane; sequence AKIARPKNRA…FQISETGLTE (203 aa). Phosphoserine is present on S287.

The protein belongs to the inward rectifier-type potassium channel (TC 1.A.2.1) family. In terms of assembly, homotetramer. Interacts with RAB28; the interaction may facilitate cone outer segments phagocytosis. In terms of processing, phosphorylation at Ser-287 by PKA increases them.

Its subcellular location is the membrane. The protein resides in the cell membrane. The enzyme catalyses K(+)(in) = K(+)(out). With respect to regulation, inhibited by Ba(2+) and Cs(+), although sensitivity to those inhibitors is much lower than in other Kir channels. In terms of biological role, inward rectifier potassium channels are characterized by a greater tendency to allow potassium to flow into the cell rather than out of it. Their voltage dependence is regulated by the concentration of extracellular potassium; as external potassium is raised, the voltage range of the channel opening shifts to more positive voltages. The inward rectification is mainly due to the blockage of outward current by internal magnesium. KCNJ13 has a very low single channel conductance, low sensitivity to block by external barium and cesium, and no dependence of its inward rectification properties on the internal blocking particle magnesium. In Bos taurus (Bovine), this protein is Inward rectifier potassium channel 13 (KCNJ13).